The chain runs to 620 residues: Rhamnogalacturonan endolyase YesW (620 aa).

The N-terminal stretch at 1 to 37 is a signal peptide; it reads MRRSCLMIRRRKRMFTAVTLLVLLVMGTSVCPVKAEG. The segment at 133–152 is disordered; sequence LDKPAGGTTPKGESYTYSAN. Residue asparagine 152 participates in substrate binding. Residues aspartate 153, aspartate 158, aspartate 160, aspartate 162, glutamine 164, and glutamate 166 each contribute to the Ca(2+) site. Aspartate 172 contacts substrate. A carbohydrate contacts are provided by aspartate 187 and lysine 207. 5 residues coordinate Ca(2+): aspartate 222, aspartate 224, aspartate 226, lysine 228, and glutamate 230. The a carbohydrate site is built by glycine 238 and arginine 255. Histidine 363, aspartate 369, aspartate 371, aspartate 373, lysine 375, glutamate 377, aspartate 386, histidine 387, histidine 399, aspartate 401, aspartate 407, aspartate 409, arginine 412, glycine 414, glutamate 416, and glutamate 422 together coordinate Ca(2+). Arginine 452 lines the substrate pocket. Residues aspartate 457, aspartate 459, tyrosine 462, glycine 464, glutamate 466, aspartate 496, aspartate 498, leucine 500, and glutamate 502 each coordinate Ca(2+). 532–534 provides a ligand contact to substrate; sequence NGT. Residues aspartate 543, leucine 545, aspartate 547, arginine 549, glutamate 551, asparagine 592, and alanine 594 each contribute to the Ca(2+) site. Tyrosine 595 is a substrate binding site. A Ca(2+)-binding site is contributed by asparagine 596.

Belongs to the polysaccharide lyase 11 family. In terms of assembly, monomer. Requires Ca(2+) as cofactor. Mn(2+) is required as a cofactor.

It is found in the secreted. The enzyme catalyses Endotype eliminative cleavage of L-alpha-rhamnopyranosyl-(1-&gt;4)-alpha-D-galactopyranosyluronic acid bonds of rhamnogalacturonan I domains in ramified hairy regions of pectin leaving L-rhamnopyranose at the reducing end and 4-deoxy-4,5-unsaturated D-galactopyranosyluronic acid at the non-reducing end.. In terms of biological role, pectinolytic enzyme that degrades type I rhamnogalacturonan from plant cell walls and releases oligosaccharide products. Degrades rhamnogalacturonan, polygalacturonic acid, pectic acid and pectin. The chain is Rhamnogalacturonan endolyase YesW (yesW) from Bacillus subtilis (strain 168).